Here is a 391-residue protein sequence, read N- to C-terminus: 3-ketoacyl-CoA thiolase (391 aa).

The active-site Acyl-thioester intermediate is cysteine 95. Catalysis depends on proton acceptor residues histidine 347 and cysteine 377.

This sequence belongs to the thiolase-like superfamily. Thiolase family. In terms of assembly, heterotetramer of two alpha chains (FadB) and two beta chains (FadA).

Its subcellular location is the cytoplasm. The enzyme catalyses an acyl-CoA + acetyl-CoA = a 3-oxoacyl-CoA + CoA. Its pathway is lipid metabolism; fatty acid beta-oxidation. Catalyzes the final step of fatty acid oxidation in which acetyl-CoA is released and the CoA ester of a fatty acid two carbons shorter is formed. The polypeptide is 3-ketoacyl-CoA thiolase (Pseudomonas fragi).